A 189-amino-acid chain; its full sequence is Orotate phosphoribosyltransferase (189 aa).

Residues R99, K100, K103, H105, and 126-134 (EDVITTGGS) contribute to the 5-phospho-alpha-D-ribose 1-diphosphate site. 2 residues coordinate orotate: T130 and R158.

This sequence belongs to the purine/pyrimidine phosphoribosyltransferase family. PyrE subfamily. As to quaternary structure, homodimer. Requires Mg(2+) as cofactor.

The catalysed reaction is orotidine 5'-phosphate + diphosphate = orotate + 5-phospho-alpha-D-ribose 1-diphosphate. Its pathway is pyrimidine metabolism; UMP biosynthesis via de novo pathway; UMP from orotate: step 1/2. In terms of biological role, catalyzes the transfer of a ribosyl phosphate group from 5-phosphoribose 1-diphosphate to orotate, leading to the formation of orotidine monophosphate (OMP). This Thermosynechococcus vestitus (strain NIES-2133 / IAM M-273 / BP-1) protein is Orotate phosphoribosyltransferase.